A 108-amino-acid polypeptide reads, in one-letter code: Large ribosomal subunit protein uL24 (108 aa).

It belongs to the universal ribosomal protein uL24 family. Part of the 50S ribosomal subunit.

One of two assembly initiator proteins, it binds directly to the 5'-end of the 23S rRNA, where it nucleates assembly of the 50S subunit. Functionally, one of the proteins that surrounds the polypeptide exit tunnel on the outside of the subunit. The polypeptide is Large ribosomal subunit protein uL24 (Trichlorobacter lovleyi (strain ATCC BAA-1151 / DSM 17278 / SZ) (Geobacter lovleyi)).